We begin with the raw amino-acid sequence, 549 residues long: Oxygen-dependent choline dehydrogenase (549 aa).

4–33 (DFVIIGSGSAGSALAYRLSEDGKNSVLVIE) is an FAD binding site. The active-site Proton acceptor is the H465.

This sequence belongs to the GMC oxidoreductase family. Requires FAD as cofactor.

It catalyses the reaction choline + A = betaine aldehyde + AH2. The enzyme catalyses betaine aldehyde + NAD(+) + H2O = glycine betaine + NADH + 2 H(+). It functions in the pathway amine and polyamine biosynthesis; betaine biosynthesis via choline pathway; betaine aldehyde from choline (cytochrome c reductase route): step 1/1. Involved in the biosynthesis of the osmoprotectant glycine betaine. Catalyzes the oxidation of choline to betaine aldehyde and betaine aldehyde to glycine betaine at the same rate. The sequence is that of Oxygen-dependent choline dehydrogenase from Rhizobium etli (strain CIAT 652).